The sequence spans 101 residues: Small ribosomal subunit protein uS14 (101 aa).

Belongs to the universal ribosomal protein uS14 family. In terms of assembly, part of the 30S ribosomal subunit. Contacts proteins S3 and S10.

In terms of biological role, binds 16S rRNA, required for the assembly of 30S particles and may also be responsible for determining the conformation of the 16S rRNA at the A site. The chain is Small ribosomal subunit protein uS14 from Wigglesworthia glossinidia brevipalpis.